The primary structure comprises 239 residues: Ribulose-phosphate 3-epimerase (239 aa).

Serine 9 provides a ligand contact to substrate. Residues histidine 34, aspartate 36, and histidine 78 each coordinate a divalent metal cation. The Proton acceptor role is filled by aspartate 36. Substrate is bound by residues histidine 78, 154–157 (GFGG), 183–185 (DGG), and 205–207 (GTS). Aspartate 183 lines the a divalent metal cation pocket. Catalysis depends on aspartate 183, which acts as the Proton donor.

Belongs to the ribulose-phosphate 3-epimerase family. Co(2+) serves as cofactor. Fe(2+) is required as a cofactor. Requires Mn(2+) as cofactor. The cofactor is Zn(2+).

It carries out the reaction D-ribulose 5-phosphate = D-xylulose 5-phosphate. Its pathway is carbohydrate degradation; pentose phosphate pathway; D-xylulose 5-phosphate from D-ribulose 5-phosphate (non-oxidative stage): step 1/1. Its function is as follows. Catalyzes the reversible epimerization of D-ribulose 5-phosphate to D-xylulose 5-phosphate. This is Ribulose-phosphate 3-epimerase (RPE1) from Eremothecium gossypii (strain ATCC 10895 / CBS 109.51 / FGSC 9923 / NRRL Y-1056) (Yeast).